The sequence spans 291 residues: Ribosomal RNA small subunit methyltransferase H (291 aa).

Residues Gly25–His27, Asp45, Phe73, Asp88, and Gln95 each bind S-adenosyl-L-methionine.

The protein belongs to the methyltransferase superfamily. RsmH family.

Its subcellular location is the cytoplasm. The enzyme catalyses cytidine(1402) in 16S rRNA + S-adenosyl-L-methionine = N(4)-methylcytidine(1402) in 16S rRNA + S-adenosyl-L-homocysteine + H(+). In terms of biological role, specifically methylates the N4 position of cytidine in position 1402 (C1402) of 16S rRNA. This is Ribosomal RNA small subunit methyltransferase H from Flavobacterium psychrophilum (strain ATCC 49511 / DSM 21280 / CIP 103535 / JIP02/86).